A 290-amino-acid chain; its full sequence is 4-hydroxy-tetrahydrodipicolinate synthase (290 aa).

T42 provides a ligand contact to pyruvate. Catalysis depends on Y129, which acts as the Proton donor/acceptor. K157 serves as the catalytic Schiff-base intermediate with substrate. I198 is a pyruvate binding site.

This sequence belongs to the DapA family. In terms of assembly, homotetramer; dimer of dimers.

The protein localises to the cytoplasm. It catalyses the reaction L-aspartate 4-semialdehyde + pyruvate = (2S,4S)-4-hydroxy-2,3,4,5-tetrahydrodipicolinate + H2O + H(+). It participates in amino-acid biosynthesis; L-lysine biosynthesis via DAP pathway; (S)-tetrahydrodipicolinate from L-aspartate: step 3/4. Functionally, catalyzes the condensation of (S)-aspartate-beta-semialdehyde [(S)-ASA] and pyruvate to 4-hydroxy-tetrahydrodipicolinate (HTPA). The chain is 4-hydroxy-tetrahydrodipicolinate synthase from Chlamydia felis (strain Fe/C-56) (Chlamydophila felis).